The primary structure comprises 67 residues: ATP synthase protein 8 (67 aa).

A helical membrane pass occupies residues 8 to 24 (TWFITILSMLMTLFILF). N6-acetyllysine; alternate is present on lysine 54. The residue at position 54 (lysine 54) is an N6-succinyllysine; alternate. Residue lysine 57 is modified to N6-acetyllysine.

The protein belongs to the ATPase protein 8 family. F-type ATPases have 2 components, CF(1) - the catalytic core - and CF(0) - the membrane proton channel. Component of an ATP synthase complex composed of ATP5PB, ATP5MC1, ATP5F1E, ATP5PD, ATP5ME, ATP5PF, ATP5MF, MT-ATP6, MT-ATP8, ATP5F1A, ATP5F1B, ATP5F1D, ATP5F1C, ATP5PO, ATP5MG, ATP5MK and ATP5MJ. Interacts with PRICKLE3.

It is found in the mitochondrion membrane. In terms of biological role, mitochondrial membrane ATP synthase (F(1)F(0) ATP synthase or Complex V) produces ATP from ADP in the presence of a proton gradient across the membrane which is generated by electron transport complexes of the respiratory chain. F-type ATPases consist of two structural domains, F(1) - containing the extramembraneous catalytic core and F(0) - containing the membrane proton channel, linked together by a central stalk and a peripheral stalk. During catalysis, ATP synthesis in the catalytic domain of F(1) is coupled via a rotary mechanism of the central stalk subunits to proton translocation. Part of the complex F(0) domain. Minor subunit located with subunit a in the membrane. This Vicugna pacos (Alpaca) protein is ATP synthase protein 8 (MT-ATP8).